Consider the following 511-residue polypeptide: 2'-acyl-2-O-sulfo-trehalose (hydroxy)phthioceranyltransferase PapA1 (511 aa).

It belongs to the PapA acyltransferase family.

It carries out the reaction a (hydroxy)phthioceranyl-[(hydroxy)phthioceranic acid synthase] + 2'-palmitoyl/stearoyl-2-O-sulfo-alpha,alpha-trehalose = a 3'-(hydroxy)phthioceranyl-2'-palmitoyl/stearoyl-2-O-sulfo-alpha,alpha-trehalose + holo-[(hydroxy)phthioceranic acid synthase].. Required for the biosynthesis of sulfolipid-1 (SL-1), a major mycobacterial cell wall lipid. Catalyzes the acylation of trehalose-2-sulfate-2'-palmitate (SL659) by adding the (hydroxy)phthioceranoyl group at the 3'-position to yield the diacylated intermediate 2-palmitoyl-3-(C43)-phthioceranyl-alpha, alpha'-D-trehalose-2'-sulfate (SL1278). The protein is 2'-acyl-2-O-sulfo-trehalose (hydroxy)phthioceranyltransferase PapA1 (papA1) of Mycobacterium tuberculosis (strain CDC 1551 / Oshkosh).